The sequence spans 136 residues: Small ribosomal subunit protein bS6 (136 aa).

Positions 97-128 (EKEQSAMLSRPDRDDFPGKDEERPRPSRRQYE) are enriched in basic and acidic residues. The segment at 97-136 (EKEQSAMLSRPDRDDFPGKDEERPRPSRRQYEDVVEGGVE) is disordered.

Belongs to the bacterial ribosomal protein bS6 family.

In terms of biological role, binds together with bS18 to 16S ribosomal RNA. The protein is Small ribosomal subunit protein bS6 of Bartonella bacilliformis (strain ATCC 35685 / KC583 / Herrer 020/F12,63).